The following is a 323-amino-acid chain: Acetyl-coenzyme A carboxylase carboxyl transferase subunit alpha (323 aa).

Residues 40 to 293 enclose the CoA carboxyltransferase C-terminal domain; the sequence is LAEKSLQLTK…RKALAESLKT (254 aa).

This sequence belongs to the AccA family. As to quaternary structure, acetyl-CoA carboxylase is a heterohexamer composed of biotin carboxyl carrier protein (AccB), biotin carboxylase (AccC) and two subunits each of ACCase subunit alpha (AccA) and ACCase subunit beta (AccD).

It localises to the cytoplasm. It catalyses the reaction N(6)-carboxybiotinyl-L-lysyl-[protein] + acetyl-CoA = N(6)-biotinyl-L-lysyl-[protein] + malonyl-CoA. The protein operates within lipid metabolism; malonyl-CoA biosynthesis; malonyl-CoA from acetyl-CoA: step 1/1. Its function is as follows. Component of the acetyl coenzyme A carboxylase (ACC) complex. First, biotin carboxylase catalyzes the carboxylation of biotin on its carrier protein (BCCP) and then the CO(2) group is transferred by the carboxyltransferase to acetyl-CoA to form malonyl-CoA. The polypeptide is Acetyl-coenzyme A carboxylase carboxyl transferase subunit alpha (Polynucleobacter necessarius subsp. necessarius (strain STIR1)).